The chain runs to 274 residues: Large ribosomal subunit protein uL2cz/uL2cy (274 aa).

2 disordered regions span residues 1–25 and 224–274; these read MAIH…VKSN and NPVD…RRSK.

It belongs to the universal ribosomal protein uL2 family. In terms of assembly, part of the 50S ribosomal subunit.

It localises to the plastid. It is found in the chloroplast. The chain is Large ribosomal subunit protein uL2cz/uL2cy (rpl2-A) from Cucumis sativus (Cucumber).